The following is a 409-amino-acid chain: Nucleoprotein (409 aa).

Disordered stretches follow at residues 1-84 and 121-194; these read MASG…KGGR and ADTK…DSGD. The segment covering 15–31 has biased composition (low complexity); the sequence is PVIKLGGPKPPKVGSSG. Positions 29–160 are RNA-binding; it reads SSGNASWFQA…GNFRWDFIPL (132 aa). The CoV N NTD domain occupies 31-156; the sequence is GNASWFQAIK…GGPDGNFRWD (126 aa). Residues 70 to 84 show a composition bias toward basic residues; sequence YWRRQARFKPGKGGR. A compositionally biased stretch (low complexity) spans 162-179; the sequence is RGRSGRSTAASSAAASRA. Basic and acidic residues predominate over residues 180-192; it reads PSREGSRGRRSDS. Serine 190 and serine 192 each carry phosphoserine; by host. The CoV N CTD domain occupies 215–331; sequence TKAKADEMAH…QCVDGVGTRP (117 aa). The dimerization stretch occupies residues 226-333; that stretch reads RYCKRTIPPN…VDGVGTRPKD (108 aa). 2 cysteine pairs are disulfide-bonded: cysteine 281–cysteine 308 and cysteine 320–cysteine 323. A disordered region spans residues 327–396; the sequence is VGTRPKDDEP…QLEFYDEPKV (70 aa). Basic residues predominate over residues 358–367; sequence QRPKKEKKLK. Basic and acidic residues predominate over residues 368-384; that stretch reads KQDDEADKALTSDEERN. Residue threonine 378 is modified to Phosphothreonine; by host. Serine 379 is subject to Phosphoserine; by host.

This sequence belongs to the gammacoronavirus nucleocapsid protein family. In terms of assembly, homooligomer. Both monomeric and oligomeric forms interact with RNA. Interacts with protein M. Interacts with NSP3; this interaction serves to tether the genome to the newly translated replicase-transcriptase complex at a very early stage of infection. ADP-ribosylated. The ADP-ribosylation is retained in the virion during infection. Post-translationally, phosphorylated on serine and threonine residues.

It is found in the virion. The protein localises to the host endoplasmic reticulum-Golgi intermediate compartment. The protein resides in the host Golgi apparatus. Its function is as follows. Packages the positive strand viral genome RNA into a helical ribonucleocapsid (RNP) and plays a fundamental role during virion assembly through its interactions with the viral genome and membrane protein M. Plays an important role in enhancing the efficiency of subgenomic viral RNA transcription as well as viral replication. This Gallus gallus (Chicken) protein is Nucleoprotein.